Here is a 132-residue protein sequence, read N- to C-terminus: DNA-entry nuclease inhibitor (132 aa).

This protein is a subunit of a 75 kDa protein complex, which governs binding and entry of donor DNA. The complex is a tetramer of two subunits of the DNA-entry nuclease and two subunits of a competence-specific protein. Only the complex is able to bind ds- and ss-DNA.

The protein resides in the cell membrane. In terms of biological role, plays a role in the competence of cells to be transformed. It inhibits the activity of the DNA-entry nuclease. In Bacillus subtilis (strain 168), this protein is DNA-entry nuclease inhibitor (nin).